A 123-amino-acid polypeptide reads, in one-letter code: Translation initiation factor 1A (123 aa).

The segment covering 1 to 11 has biased composition (acidic residues); that stretch reads MSPDKTEDEDK. The tract at residues 1–26 is disordered; the sequence is MSPDKTEDEDKDVNVDQDQFNEEEES. The S1-like domain occupies 28–102; that stretch reads GRVILPNKKK…EKADVVYRYT (75 aa).

Belongs to the eIF-1A family.

Seems to be required for maximal rate of protein biosynthesis. Enhances ribosome dissociation into subunits and stabilizes the binding of the initiator Met-tRNA(I) to 40 S ribosomal subunits. The polypeptide is Translation initiation factor 1A (eIF1A) (Thermoplasma volcanium (strain ATCC 51530 / DSM 4299 / JCM 9571 / NBRC 15438 / GSS1)).